The sequence spans 156 residues: Transcription elongation factor GreA (156 aa).

Positions M1 to E84 form a coiled coil.

Belongs to the GreA/GreB family.

In terms of biological role, necessary for efficient RNA polymerase transcription elongation past template-encoded arresting sites. The arresting sites in DNA have the property of trapping a certain fraction of elongating RNA polymerases that pass through, resulting in locked ternary complexes. Cleavage of the nascent transcript by cleavage factors such as GreA or GreB allows the resumption of elongation from the new 3'terminus. GreA releases sequences of 2 to 3 nucleotides. This is Transcription elongation factor GreA from Ureaplasma urealyticum serovar 10 (strain ATCC 33699 / Western).